Here is a 630-residue protein sequence, read N- to C-terminus: Biosynthetic arginine decarboxylase (630 aa).

Position 99 is an N6-(pyridoxal phosphate)lysine (lysine 99). 281 to 291 (VDIGGGLGVDY) lines the substrate pocket.

This sequence belongs to the Orn/Lys/Arg decarboxylase class-II family. SpeA subfamily. Mg(2+) is required as a cofactor. It depends on pyridoxal 5'-phosphate as a cofactor.

It carries out the reaction L-arginine + H(+) = agmatine + CO2. In terms of biological role, catalyzes the biosynthesis of agmatine from arginine. The sequence is that of Biosynthetic arginine decarboxylase from Bacteroides thetaiotaomicron (strain ATCC 29148 / DSM 2079 / JCM 5827 / CCUG 10774 / NCTC 10582 / VPI-5482 / E50).